A 102-amino-acid polypeptide reads, in one-letter code: Small ribosomal subunit protein uS10 (102 aa).

It belongs to the universal ribosomal protein uS10 family. As to quaternary structure, part of the 30S ribosomal subunit.

Functionally, involved in the binding of tRNA to the ribosomes. The chain is Small ribosomal subunit protein uS10 from Streptomyces griseus subsp. griseus (strain JCM 4626 / CBS 651.72 / NBRC 13350 / KCC S-0626 / ISP 5235).